The following is a 242-amino-acid chain: Zinc finger protein ZOP1 (242 aa).

The segment at 11 to 42 (KWCEFCKIWIQNNPTSIRNHDLGKRHRECVDK) adopts a Matrin-type zinc-finger fold. Residues 42-71 (KKLTDMRERSAAKDKELKKNEKLLQQIEAK) are a coiled coil. Residues 154 to 242 (VKKPVSSSGA…PLLGLYNRPF (89 aa)) are disordered. Residues 155 to 172 (KKPVSSSGAGPSVGKPPG) are compositionally biased toward low complexity. Basic and acidic residues predominate over residues 201-233 (RQDEKPKKVSAEEKAALKAREAARKRVEDREKP).

As to quaternary structure, component of a pre-mRNA splicing complex. Interacts with STA1. Interacts with PRP31.

The protein localises to the nucleus. Its subcellular location is the cajal body. In terms of biological role, nucleic acid-binding protein that promotes Pol IV-dependent small interfering RNA (siRNA) accumulation, DNA methylation and transcriptional silencing. May possess both RNA-directed DNA methylation (RdDM)-dependent and -independent roles in transcriptional silencing. Acts as a pre-mRNA splicing factor that associates with several typical components of the splicing machinery as well as with Pol II. In Arabidopsis thaliana (Mouse-ear cress), this protein is Zinc finger protein ZOP1.